A 394-amino-acid polypeptide reads, in one-letter code: Proliferation-associated protein 2G4 (394 aa).

Residue S2 is modified to N-acetylserine. At S2 the chain carries Phosphoserine. The necessary for nucleolar localization stretch occupies residues 2-48 (SGEDEQQEQTIAEDLVVTKYKMGGDIANRVLRSLVEASSSGVSVLSL). The interval 46–54 (LSLCEKGDA) is RNA-binding. Residue K298 forms a Glycyl lysine isopeptide (Lys-Gly) (interchain with G-Cter in SUMO2) linkage. The tract at residues 301 to 394 (LLQPFNVLYE…ETLEENGAGD (94 aa)) is necessary for nucleolar localization. S335 bears the Phosphoserine mark. Positions 358 to 394 (LQSSASRKTQKKKKKKASKTVENATSGETLEENGAGD) are disordered. A Phosphoserine; by PKC/PRKCD modification is found at S361. The tract at residues 361-375 (SASRKTQKKKKKKAS) is interaction with RNA. The segment covering 365 to 375 (KTQKKKKKKAS) has biased composition (basic residues). Residues T366 and T386 each carry the phosphothreonine modification.

The protein belongs to the peptidase M24 family. Isoform 2 interacts with the cytoplasmic domain of non-phosphorylated ERBB3; the interaction requires PKC activity. Interacts with AR. Treatment with HRG leads to dissociation from ERBB3 and increases association with AR. Interacts with nucleolin/NCL. Component of a ribonucleoprotein complex containing at least PA2G4, NCL, TOP1, PABPC2, RPLP0, acetylated histone H1 (HIST1H1A or H1F1), histone H1 2/4, RPL4, RPL8, RPL15, RPL18, RPL18A, RPL21, RPL11, RPL12, RPL28, RPL27, RPLP2 and RPL24. Interacts with HDAC2. Interacts with RB1; the interaction is enhanced upon PA2G4 dephosphorylation. Interacts with AKT1. Isoform 1 and isoform 2 interact with RNF20. Isoform 2 interacts with HUWE1. Interacts with DNAJC21. Phosphorylated on serine and threonine residues. Phosphorylation is enhanced by HRG treatment. Basal phosphorylation is PKC-dependent and HRG-induced phosphorylation is predominantly PKC-independent. Phosphorylation at Ser-361 by PKC/PRKCD regulates its nucleolar localization. Post-translationally, isoform 2 is polyubiquitinated, leading to proteasomal degradation and phosphorylation by PKC/PRKCD enhances polyubiquitination. In terms of tissue distribution, widely expressed.

It localises to the cytoplasm. The protein localises to the nucleus. It is found in the nucleolus. Functionally, may play a role in a ERBB3-regulated signal transduction pathway. Seems be involved in growth regulation. Acts a corepressor of the androgen receptor (AR) and is regulated by the ERBB3 ligand neuregulin-1/heregulin (HRG). Inhibits transcription of some E2F1-regulated promoters, probably by recruiting histone acetylase (HAT) activity. Binds RNA. Associates with 28S, 18S and 5.8S mature rRNAs, several rRNA precursors and probably U3 small nucleolar RNA. May be involved in regulation of intermediate and late steps of rRNA processing. May be involved in ribosome assembly. Mediates cap-independent translation of specific viral IRESs (internal ribosomal entry site). Together with PTBP1 is required for the translation initiation on the foot-and-mouth disease virus (FMDV) IRES. Regulates cell proliferation, differentiation, and survival. Isoform 1 suppresses apoptosis whereas isoform 2 promotes cell differentiation. This Mus musculus (Mouse) protein is Proliferation-associated protein 2G4 (Pa2g4).